Consider the following 218-residue polypeptide: Adenylate kinase (218 aa).

10 to 15 is an ATP binding site; that stretch reads GAGKGT. The tract at residues 30-59 is NMP; it reads STGDMLRAAIQAQTPLGLEAKKVMDDGKLV. AMP-binding positions include T31, R36, 57-59, 85-88, and Q92; these read KLV and GFPR. Residues 122–159 form an LID region; sequence GRRVHLASGRTYHVIFNPPKKEGVDDITGEPLIQREDD. Residues R123 and 132–133 each bind ATP; that span reads TY. R156 and R167 together coordinate AMP. G203 serves as a coordination point for ATP.

The protein belongs to the adenylate kinase family. In terms of assembly, monomer.

It is found in the cytoplasm. The catalysed reaction is AMP + ATP = 2 ADP. It participates in purine metabolism; AMP biosynthesis via salvage pathway; AMP from ADP: step 1/1. Its function is as follows. Catalyzes the reversible transfer of the terminal phosphate group between ATP and AMP. Plays an important role in cellular energy homeostasis and in adenine nucleotide metabolism. This chain is Adenylate kinase, found in Prosthecochloris aestuarii (strain DSM 271 / SK 413).